The primary structure comprises 242 residues: DNA repair protein RecO (242 aa).

Belongs to the RecO family. In terms of assembly, monomer.

Involved in DNA repair and RecF pathway recombination. The polypeptide is DNA repair protein RecO (Shigella flexneri).